Consider the following 257-residue polypeptide: Dihydroorotate dehydrogenase B (NAD(+)), electron transfer subunit (257 aa).

Positions 2-101 constitute an FAD-binding FR-type domain; it reads IRQEKMRVVS…LGPIGNGFPV (100 aa). Residues 52-55, 69-71, and 76-77 each bind FAD; these read RPIS, IYR, and GT. [2Fe-2S] cluster contacts are provided by C220, C225, C228, and C244.

This sequence belongs to the PyrK family. In terms of assembly, heterotetramer of 2 PyrK and 2 PyrD type B subunits. It depends on [2Fe-2S] cluster as a cofactor. Requires FAD as cofactor.

It participates in pyrimidine metabolism; UMP biosynthesis via de novo pathway; orotate from (S)-dihydroorotate (NAD(+) route): step 1/1. Responsible for channeling the electrons from the oxidation of dihydroorotate from the FMN redox center in the PyrD type B subunit to the ultimate electron acceptor NAD(+). The polypeptide is Dihydroorotate dehydrogenase B (NAD(+)), electron transfer subunit (Lysinibacillus sphaericus (strain C3-41)).